The following is a 317-amino-acid chain: L-lactate dehydrogenase (317 aa).

3 residues coordinate NAD(+): Val16, Asp37, and Tyr69. Residues Gln86, Arg92, and 124–127 (NPVD) contribute to the substrate site. Residues 122-124 (ASN) and Ser147 each bind NAD(+). 152–155 (DSAR) contacts substrate. Residue His179 is the Proton acceptor of the active site. Tyr223 carries the phosphotyrosine modification. Thr232 provides a ligand contact to substrate.

It belongs to the LDH/MDH superfamily. LDH family. In terms of assembly, homotetramer.

It localises to the cytoplasm. The catalysed reaction is (S)-lactate + NAD(+) = pyruvate + NADH + H(+). It functions in the pathway fermentation; pyruvate fermentation to lactate; (S)-lactate from pyruvate: step 1/1. Catalyzes the conversion of lactate to pyruvate. The protein is L-lactate dehydrogenase of Mycoplasma capricolum subsp. capricolum (strain California kid / ATCC 27343 / NCTC 10154).